The sequence spans 61 residues: Large ribosomal subunit protein uL30 (61 aa).

Belongs to the universal ribosomal protein uL30 family. In terms of assembly, part of the 50S ribosomal subunit.

This chain is Large ribosomal subunit protein uL30, found in Legionella pneumophila (strain Paris).